The following is a 376-amino-acid chain: Ribonucleoside-diphosphate reductase 1 subunit beta (376 aa).

The Fe cation site is built by aspartate 85, glutamate 116, and histidine 119. The active site involves tyrosine 123. The Fe cation site is built by glutamate 205, glutamate 239, and histidine 242.

The protein belongs to the ribonucleoside diphosphate reductase small chain family. In terms of assembly, tetramer of two alpha (R1) and two beta (R2) subunits. The B1 protein is a dimer of alpha subunits. A radical transfer pathway occurs between Tyr-123 of R2 and R1. It depends on Fe cation as a cofactor.

It carries out the reaction a 2'-deoxyribonucleoside 5'-diphosphate + [thioredoxin]-disulfide + H2O = a ribonucleoside 5'-diphosphate + [thioredoxin]-dithiol. Its function is as follows. Provides the precursors necessary for DNA synthesis. Catalyzes the biosynthesis of deoxyribonucleotides from the corresponding ribonucleotides. R2 contains the tyrosyl radical required for catalysis. The sequence is that of Ribonucleoside-diphosphate reductase 1 subunit beta (nrdB) from Salmonella typhimurium (strain LT2 / SGSC1412 / ATCC 700720).